The primary structure comprises 176 residues: F(420)H(2) dehydrogenase subunit J (176 aa).

5 helical membrane-spanning segments follow: residues 13–33 (TAVFGLLALVTVFFAIFVVIA), 39–59 (AGLALIMCMFGVAGLYILLNA), 64–84 (VIQVLVYIGAIGVLILFAVML), 99–119 (PLAFLVCLLFVAVVVTGAFGT), and 140–160 (IGMLIFTHFVAPFEVLSIVLL).

The protein belongs to the complex I subunit 6 family. As to quaternary structure, the FPO complex is composed of at least 13 different subunits. FpoA, FpoH, FpoJ, FpoK, FpoL, FpoM and FpoN proteins constitute the membrane sector of the complex.

It is found in the cell membrane. The enzyme catalyses methanophenazine + reduced coenzyme F420-(gamma-L-Glu)(n) = dihydromethanophenazine + oxidized coenzyme F420-(gamma-L-Glu)(n) + H(+). Functionally, component of the F(420)H(2) dehydrogenase (FPO complex) which is part of the energy-conserving F(420)H(2):heterodisulfide oxidoreductase system. The membrane-bound electron transfer system of the complex plays an important role in the metabolism of methylotrophic methanogens when the organisms grow on methanol or methylamines. Catalyzes the oxidation of methanophenazine to dihydromethanophenazine. It shuttles electrons from F(420)H(2), via FAD and iron-sulfur (Fe-S) centers, to methanophenazine (an electron carrier in the membrane). It couples the redox reaction to proton translocation (for every two electrons transferred, two hydrogen ions are translocated across the cytoplasmic membrane), and thus conserves the redox energy in a proton gradient. It also catalyzes the oxidation of F(420)H(2) with quinones such as 2,3-dimethyl-1,4-naphthoquinone, 2-methyl-1,4-naphthoquinone and tetramethyl-p-benzoquinone. This is F(420)H(2) dehydrogenase subunit J (fpoJ) from Methanosarcina mazei (strain ATCC BAA-159 / DSM 3647 / Goe1 / Go1 / JCM 11833 / OCM 88) (Methanosarcina frisia).